Reading from the N-terminus, the 348-residue chain is Rhodopsin (348 aa).

Residue Met1 is modified to N-acetylmethionine. Residues Met1 to Gln36 are Extracellular-facing. 2 N-linked (GlcNAc...) asparagine glycosylation sites follow: Asn2 and Asn15. Residues Phe37–Val61 traverse the membrane as a helical segment. Residues Thr62–Asn73 are Cytoplasmic-facing. The chain crosses the membrane as a helical span at residues Tyr74–Tyr96. At Thr97–Cys110 the chain is on the extracellular side. A disulfide bridge links Cys110 with Cys187. A helical transmembrane segment spans residues Asn111–Ile133. The short motif at Glu134–Tyr136 is the 'Ionic lock' involved in activated form stabilization element. Topologically, residues Glu134–His152 are cytoplasmic. A helical membrane pass occupies residues Ala153–Phe173. Over Gly174–Ser202 the chain is Extracellular. A Zn(2+)-binding site is contributed by Glu201. A helical membrane pass occupies residues Phe203–Gly224. At Gln225–Arg252 the chain is on the cytoplasmic side. A helical transmembrane segment spans residues Met253 to Tyr274. Residues Ile275–Ile286 lie on the Extracellular side of the membrane. A Zn(2+)-binding site is contributed by Gln279. Residues Phe287–Met308 traverse the membrane as a helical segment. Lys296 is modified (N6-(retinylidene)lysine). The Cytoplasmic segment spans residues Met309–Ala348. Residues Cys322 and Cys323 are each lipidated (S-palmitoyl cysteine). An interaction with SAG region spans residues Asp330–Ala348. Position 334 is a phosphoserine (Ser334). Thr336 carries the phosphothreonine modification. Ser338 is modified (phosphoserine). Phosphothreonine is present on residues Thr340 and Thr342. Phosphoserine is present on Ser343.

It belongs to the G-protein coupled receptor 1 family. Opsin subfamily. In terms of assembly, homodimer. May form a complex composed of RHO, GRK1 and RCVRN in a Ca(2+)-dependent manner; RCVRN prevents the interaction between GRK1 and RHO. Interacts with GRK1. Interacts (phosphorylated form) with SAG. Interacts with GNAT1. Interacts with GNAT3. SAG and G-proteins compete for a common binding site. Interacts with PRCD; the interaction promotes PRCD stability. Forms a complex with ASAP1 and ARF4. Forms a complex with ASAP1, RAB11A, Rabin8/RAB3IP, ARF4 and RAB11FIP3; the complex regulates Golgi-to-cilia rhodopsin/RHO transport in photoreceptors. Post-translationally, phosphorylated on some or all of the serine and threonine residues present in the C-terminal region. Contains one covalently linked retinal chromophore. Upon light absorption, the covalently bound 11-cis-retinal is converted to all-trans-retinal. After hydrolysis of the Schiff base and release of the covalently bound all-trans-retinal, active rhodopsin is regenerated by binding of a fresh molecule of 11-cis-retinal.

It is found in the membrane. The protein resides in the cell projection. Its subcellular location is the cilium. It localises to the photoreceptor outer segment. Photoreceptor required for image-forming vision at low light intensity. Required for photoreceptor cell viability after birth. Light-induced isomerization of 11-cis to all-trans retinal triggers a conformational change that activates signaling via G-proteins. Subsequent receptor phosphorylation mediates displacement of the bound G-protein alpha subunit by the arrestin SAG and terminates signaling. The sequence is that of Rhodopsin (RHO) from Macaca fascicularis (Crab-eating macaque).